We begin with the raw amino-acid sequence, 93 residues long: Cobalt transport protein CbiN (93 aa).

A run of 2 helical transmembrane segments spans residues 5 to 25 (LMLL…NHGG) and 63 to 83 (LLFT…LGYC).

Belongs to the CbiN family. Forms an energy-coupling factor (ECF) transporter complex composed of an ATP-binding protein (A component, CbiO), a transmembrane protein (T component, CbiQ) and 2 possible substrate-capture proteins (S components, CbiM and CbiN) of unknown stoichimetry.

The protein localises to the cell inner membrane. It functions in the pathway cofactor biosynthesis; adenosylcobalamin biosynthesis. Part of the energy-coupling factor (ECF) transporter complex CbiMNOQ involved in cobalt import. The protein is Cobalt transport protein CbiN of Salmonella newport (strain SL254).